We begin with the raw amino-acid sequence, 736 residues long: Phosphoribosylformylglycinamidine synthase subunit PurL (736 aa).

Histidine 48 is an active-site residue. Positions 51 and 90 each coordinate ATP. Position 92 (glutamate 92) interacts with Mg(2+). Substrate-binding positions include 93–96 (SHNH) and arginine 115. The active-site Proton acceptor is histidine 94. Aspartate 116 is a binding site for Mg(2+). Residue glutamine 239 participates in substrate binding. A Mg(2+)-binding site is contributed by aspartate 267. A substrate-binding site is contributed by 311–313 (ESQ). ATP-binding residues include aspartate 492 and glycine 529. Asparagine 530 serves as a coordination point for Mg(2+). Serine 532 is a substrate binding site.

This sequence belongs to the FGAMS family. As to quaternary structure, monomer. Part of the FGAM synthase complex composed of 1 PurL, 1 PurQ and 2 PurS subunits.

The protein resides in the cytoplasm. The enzyme catalyses N(2)-formyl-N(1)-(5-phospho-beta-D-ribosyl)glycinamide + L-glutamine + ATP + H2O = 2-formamido-N(1)-(5-O-phospho-beta-D-ribosyl)acetamidine + L-glutamate + ADP + phosphate + H(+). It functions in the pathway purine metabolism; IMP biosynthesis via de novo pathway; 5-amino-1-(5-phospho-D-ribosyl)imidazole from N(2)-formyl-N(1)-(5-phospho-D-ribosyl)glycinamide: step 1/2. Its function is as follows. Part of the phosphoribosylformylglycinamidine synthase complex involved in the purines biosynthetic pathway. Catalyzes the ATP-dependent conversion of formylglycinamide ribonucleotide (FGAR) and glutamine to yield formylglycinamidine ribonucleotide (FGAM) and glutamate. The FGAM synthase complex is composed of three subunits. PurQ produces an ammonia molecule by converting glutamine to glutamate. PurL transfers the ammonia molecule to FGAR to form FGAM in an ATP-dependent manner. PurS interacts with PurQ and PurL and is thought to assist in the transfer of the ammonia molecule from PurQ to PurL. This is Phosphoribosylformylglycinamidine synthase subunit PurL from Beijerinckia indica subsp. indica (strain ATCC 9039 / DSM 1715 / NCIMB 8712).